The primary structure comprises 22 residues: MMLFITVYDINRKQKKRYGLHG.

Belongs to the asfivirus C84L family.

This is an uncharacterized protein from Ornithodoros (relapsing fever ticks).